The following is a 255-amino-acid chain: Syntaxin-6 (255 aa).

Serine 2 carries the N-acetylserine modification. Serine 2 bears the Phosphoserine mark. The interval 2 to 168 (SMEDPFFVVK…QAQQQLIVEQ (167 aa)) is required for interaction with VPS51. Residues 2–234 (SMEDPFFVVK…VSHMTSDRRQ (233 aa)) are Cytoplasmic-facing. The stretch at 41–74 (EEIDWTTNELRNNLRSIEWDLEDLDETISIVEAN) forms a coiled coil. A phosphoserine mark is found at serine 129 and serine 152. The region spanning 163 to 225 (QLIVEQQDEQ…DNVMKKLAKV (63 aa)) is the t-SNARE coiled-coil homology domain. Residues 235 to 255 (WCAIAILFAVLLVVLILFLVL) form a helical; Anchor for type IV membrane protein membrane-spanning segment.

Belongs to the syntaxin family. In terms of assembly, identified in a complex containing STX6, STX12, VAMP4 and VTI1A. Binds EEA1. Interacts with VPS45A. Interacts with MARCHF2; the interaction promotes MARCHF2-mediated ubiquitination and degradation of CFTR. Interacts with MARCHF3. Interacts with GOPC. Interacts with BLTP3B (via C-terminal coiled-coil domain). Interacts with BAIAP3; this interaction is increased in the presence of calcium. Interacts with VPS13B.

It localises to the golgi apparatus membrane. It is found in the golgi apparatus. The protein localises to the trans-Golgi network membrane. Its subcellular location is the recycling endosome membrane. SNARE promoting movement of transport vesicles to target membranes. Targets endosomes to the trans-Golgi network, and may therefore function in retrograde trafficking. Together with SNARE STX12, promotes movement of vesicles from endosomes to the cell membrane, and may therefore function in the endocytic recycling pathway. In Homo sapiens (Human), this protein is Syntaxin-6 (STX6).